Here is a 193-residue protein sequence, read N- to C-terminus: Heat shock protein beta-1 (193 aa).

Residues S15 and S80 each carry the phosphoserine modification. Positions 74–182 (RALSELSSGI…QSSEITIPVT (109 aa)) constitute a sHSP domain.

The protein belongs to the small heat shock protein (HSP20) family. Homooligomer. Homodimer; becomes monomeric upon activation. Heterooligomer. Smooth, cardiac and skeletal muscle, hardly detectable in fibroblasts or focal contacts.

Its subcellular location is the cytoplasm. It is found in the nucleus. It localises to the cytoskeleton. The protein resides in the spindle. In terms of biological role, small heat shock protein which functions as a molecular chaperone probably maintaining denatured proteins in a folding-competent state. Plays a role in stress resistance and actin organization. This is Heat shock protein beta-1 (HSPB1) from Gallus gallus (Chicken).